The following is a 336-amino-acid chain: UPF0284 protein PYRAB00380 (336 aa).

The protein belongs to the UPF0284 family.

The chain is UPF0284 protein PYRAB00380 from Pyrococcus abyssi (strain GE5 / Orsay).